Consider the following 58-residue polypeptide: Large ribosomal subunit protein bL32 (58 aa).

The disordered stretch occupies residues 1 to 23; it reads MAVPARHTSSAKKNRRRTHYKLT. The segment covering 9 to 20 has biased composition (basic residues); sequence SSAKKNRRRTHY.

This sequence belongs to the bacterial ribosomal protein bL32 family.

The protein is Large ribosomal subunit protein bL32 (rpmF) of Lactococcus lactis subsp. cremoris (Streptococcus cremoris).